Reading from the N-terminus, the 652-residue chain is DNA ligase (652 aa).

NAD(+)-binding positions include 29 to 33 (DSEYD), 78 to 79 (SL), and glutamate 107. Catalysis depends on lysine 109, which acts as the N6-AMP-lysine intermediate. NAD(+) is bound by residues arginine 130, glutamate 164, lysine 278, and lysine 302. Residues cysteine 395, cysteine 398, cysteine 413, and cysteine 418 each contribute to the Zn(2+) site. Residues 577 to 652 (AADAALSGMT…IRDEDWLDSL (76 aa)) form the BRCT domain.

This sequence belongs to the NAD-dependent DNA ligase family. LigA subfamily. The cofactor is Mg(2+). It depends on Mn(2+) as a cofactor.

The catalysed reaction is NAD(+) + (deoxyribonucleotide)n-3'-hydroxyl + 5'-phospho-(deoxyribonucleotide)m = (deoxyribonucleotide)n+m + AMP + beta-nicotinamide D-nucleotide.. Its function is as follows. DNA ligase that catalyzes the formation of phosphodiester linkages between 5'-phosphoryl and 3'-hydroxyl groups in double-stranded DNA using NAD as a coenzyme and as the energy source for the reaction. It is essential for DNA replication and repair of damaged DNA. The sequence is that of DNA ligase from Streptococcus sanguinis (strain SK36).